A 518-amino-acid polypeptide reads, in one-letter code: DNA-binding protein Ikaros (518 aa).

The segment at 1-51 (METDEAQDMSQVSGKESPPISDVPDDADEPMPVPEDLSTTTGGQQSVKNER) is disordered. The span at 37-47 (LSTTTGGQQSV) shows a compositional bias: polar residues. 4 consecutive C2H2-type zinc fingers follow at residues 117–139 (LKCD…NRSH), 145–167 (FQCN…IKLH), 173–195 (FKCH…LRTH), and 201–224 (HKCG…ERCH). The tract at residues 381 to 405 (SVSSERDASPSNSCQDSTDTESNNE) is disordered. C2H2-type zinc fingers lie at residues 461–483 (YKCE…MGCH) and 489–513 (FECN…RGEH).

It belongs to the Ikaros C2H2-type zinc-finger protein family. In terms of tissue distribution, expressed in embryonic hematopoietic organs such as the bursa of Fabricius, thymus and spleen. In the adult, expressed in spleen, thymus, bursa and peripheral blood leukocytes.

It is found in the nucleus. Functionally, binds and activates the enhancer (delta-A element) of the CD3-delta gene. Functions in the specification and the maturation of the T-lymphocyte. Also interacts with a critical control element in the TDT (terminal deoxynucleotidyltransferase) promoter as well as with the promoters for other genes expressed during early stages of B- and T-cell development. Function is isoform-specific and is modulated by dominant-negative inactive isoforms. The polypeptide is DNA-binding protein Ikaros (IKZF1) (Gallus gallus (Chicken)).